The sequence spans 126 residues: uncharacterized protein (126 aa).

This is an uncharacterized protein from Mycoplasmopsis pulmonis (strain UAB CTIP) (Mycoplasma pulmonis).